Consider the following 61-residue polypeptide: Small ribosomal subunit protein uS14 (61 aa).

Residues C24, C27, C40, and C43 each contribute to the Zn(2+) site.

Belongs to the universal ribosomal protein uS14 family. Zinc-binding uS14 subfamily. Part of the 30S ribosomal subunit. Contacts proteins S3 and S10. Requires Zn(2+) as cofactor.

Functionally, binds 16S rRNA, required for the assembly of 30S particles and may also be responsible for determining the conformation of the 16S rRNA at the A site. The polypeptide is Small ribosomal subunit protein uS14 (Deinococcus deserti (strain DSM 17065 / CIP 109153 / LMG 22923 / VCD115)).